The following is a 142-amino-acid chain: Transcriptional regulator MraZ (142 aa).

SpoVT-AbrB domains lie at 5–51 (ASSL…PRPV) and 77–120 (ASDV…DATK).

Belongs to the MraZ family. Forms oligomers.

It is found in the cytoplasm. The protein resides in the nucleoid. The polypeptide is Transcriptional regulator MraZ (Janthinobacterium sp. (strain Marseille) (Minibacterium massiliensis)).